The following is a 464-amino-acid chain: Protein transport protein HofB homolog (464 aa).

Residue glycine 264–serine 271 coordinates ATP.

The protein belongs to the GSP E family.

The protein is Protein transport protein HofB homolog (hofB) of Haemophilus influenzae (strain ATCC 51907 / DSM 11121 / KW20 / Rd).